Consider the following 296-residue polypeptide: MLRSGLASLIVDVNLRRTLRPSPTFSFPAHLSRCIITSRYSSRTSLRFPIQISRHQHRLSYFSSSSSSEQSRPTSSSRNSFSGHGQLDSDDNSSPPPSQSSSKVLTLPTVLTLGRVAAVPLLVATFYVDSWWGTTATTSIFIAAAITDWLDGYLARKMRLGSAFGAFLDPVADKLMVAATLILLCTKPIQVAELGPLPWLLTVPSIAIIGREITMSAVREWAASQNGKLLEAVAVNNLGKWKTATQMTALTILLASRDSNVGWLVASGAGLLYVSAGLSVWSLAVYMRKIWKVLMK.

The N-terminal 39 residues, 1–39, are a transit peptide targeting the chloroplast and mitochondrion; it reads MLRSGLASLIVDVNLRRTLRPSPTFSFPAHLSRCIITSR. The segment covering 62–82 has biased composition (low complexity); it reads FSSSSSSEQSRPTSSSRNSFS. Residues 62–103 are disordered; the sequence is FSSSSSSEQSRPTSSSRNSFSGHGQLDSDDNSSPPPSQSSSK. The next 5 helical transmembrane spans lie at 104 to 124, 126 to 146, 164 to 184, 189 to 209, and 261 to 281; these read VLTL…LLVA, FYVD…AAAI, FGAF…LILL, IQVA…IAII, and VGWL…LSVW.

This sequence belongs to the CDP-alcohol phosphatidyltransferase class-I family. It depends on Mn(2+) as a cofactor.

Its subcellular location is the plastid. It is found in the chloroplast membrane. The protein localises to the mitochondrion membrane. It catalyses the reaction a CDP-1,2-diacyl-sn-glycerol + sn-glycerol 3-phosphate = a 1,2-diacyl-sn-glycero-3-phospho-(1'-sn-glycero-3'-phosphate) + CMP + H(+). Its pathway is phospholipid metabolism; phosphatidylglycerol biosynthesis; phosphatidylglycerol from CDP-diacylglycerol: step 1/2. Functionally, catalyzes the committed step to the synthesis of the acidic phospholipids, including phosphatidylglycerol (PG). Transfers specifically a phosphatidyl group from CDP-diacylglycerol to glycerol-3-phosphate to form phosphatidylglycerophosphate. Cannot catalyze the phosphatidyl group transfer to inositol, serine, choline or phosphatidylglycerol. Possesses high activity with CDP-dipalmitoylglycerol and low activity with CDP-dioleoylglycerol. Essential for chloroplast differentiation and PG accumulation in thylakoids, an essential process for the assembly of antenna-reaction center complexes to optimize energy transfer from antenna pigments, and for subsequent photochemical efficiency of photosystem II (PSII). During cold acclimation (at 5 degrees Celsius), necessary for the photosystem I (PSI) photochemistry, including both reaction center and light-harvesting integrity. But dispensable in mitochondrion, being redundant with PGPS2 for the production of PG and its derivative cardiolipin (CL) in mitochondrial membranes. Together with PGPS2, required for the proper embryo development by providing PG accurate levels. This chain is CDP-diacylglycerol--glycerol-3-phosphate 3-phosphatidyltransferase 1, chloroplastic/mitochondrial, found in Arabidopsis thaliana (Mouse-ear cress).